The primary structure comprises 266 residues: 3',5'-cyclic-nucleotide phosphodiesterase alr5338 (266 aa).

Fe cation-binding residues include D14, H16, D56, N86, H155, H194, and H196. AMP contacts are provided by residues H16, D56, and 86 to 87 (NH). An AMP-binding site is contributed by H196.

Belongs to the cyclic nucleotide phosphodiesterase class-III family. Fe(2+) serves as cofactor. Mn(2+) is required as a cofactor.

It catalyses the reaction a nucleoside 3',5'-cyclic phosphate + H2O = a nucleoside 5'-phosphate + H(+). It carries out the reaction 3',5'-cyclic AMP + H2O = AMP + H(+). The enzyme catalyses 3',5'-cyclic GMP + H2O = GMP + H(+). Activated by iron and manganese. Its function is as follows. Hydrolyzes cAMP to 5'-AMP. Plays an important regulatory role in modulating the intracellular concentration of cAMP, thereby influencing cAMP-dependent processes. Can also hydrolyze cGMP. In Nostoc sp. (strain PCC 7120 / SAG 25.82 / UTEX 2576), this protein is 3',5'-cyclic-nucleotide phosphodiesterase alr5338.